The sequence spans 882 residues: Valine--tRNA ligase (882 aa).

Residues 45 to 55 (PNVTGKLHLGH) carry the 'HIGH' region motif. Positions 519-523 (KMSKS) match the 'KMSKS' region motif. Lys-522 provides a ligand contact to ATP. Residues 808–882 (LADLLNVEEE…RIAEMHKLVK (75 aa)) adopt a coiled-coil conformation.

It belongs to the class-I aminoacyl-tRNA synthetase family. ValS type 1 subfamily. In terms of assembly, monomer.

It is found in the cytoplasm. The enzyme catalyses tRNA(Val) + L-valine + ATP = L-valyl-tRNA(Val) + AMP + diphosphate. Catalyzes the attachment of valine to tRNA(Val). As ValRS can inadvertently accommodate and process structurally similar amino acids such as threonine, to avoid such errors, it has a 'posttransfer' editing activity that hydrolyzes mischarged Thr-tRNA(Val) in a tRNA-dependent manner. This chain is Valine--tRNA ligase, found in Streptococcus pyogenes serotype M18 (strain MGAS8232).